A 328-amino-acid polypeptide reads, in one-letter code: MSHVELQPGFDFQQAGKEVLAIERECLAELDQYINQNFTLACEKMFWCKGKVVVMGMGKSGHIGRKMAATFASTGTPSFFVHPGEAAHGDLGMVTPQDVVIAISNSGESSEITALIPVLKRLHIPLICITGRPESSMARAADVHLCVKVAKEACPLGLAPTSSTTATLVMGDALAVALLKARGFTAEDFALSHPGGALGRKLLLRVNDIMHTGDEIPHVKKTASLRDALLEVTRKNLGMTVICDDNMMIEGIFTDGDLRRVFDMGVDVRQLSIADVMTPGGIRVRPGILAVEALNLMQSRHITSVMVADGDHLLGVLHMHDLLRAGVV.

Positions 42–184 (CEKMFWCKGK…AVALLKARGF (143 aa)) constitute an SIS domain. Substrate-binding positions include 75 to 76 (GT), H82, H88, 114 to 123 (ALIPVLKRLH), 148 to 150 (KVA), T222, and D275. H82 contributes to the Zn(2+) binding site. Positions 210-268 (MHTGDEIPHVKKTASLRDALLEVTRKNLGMTVICDDNMMIEGIFTDGDLRRVFDMGVDV) constitute a CBS 1 domain. The region spanning 277–328 (MTPGGIRVRPGILAVEALNLMQSRHITSVMVADGDHLLGVLHMHDLLRAGVV) is the CBS 2 domain.

It belongs to the SIS family. GutQ/KpsF subfamily. Homotetramer.

The enzyme catalyses D-arabinose 5-phosphate = D-ribulose 5-phosphate. It functions in the pathway carbohydrate biosynthesis; 3-deoxy-D-manno-octulosonate biosynthesis; 3-deoxy-D-manno-octulosonate from D-ribulose 5-phosphate: step 1/3. Its pathway is bacterial outer membrane biogenesis; lipopolysaccharide biosynthesis. Functionally, involved in the biosynthesis of 3-deoxy-D-manno-octulosonate (KDO), a unique 8-carbon sugar component of lipopolysaccharides (LPSs). Catalyzes the reversible aldol-ketol isomerization between D-ribulose 5-phosphate (Ru5P) and D-arabinose 5-phosphate (A5P). The polypeptide is Arabinose 5-phosphate isomerase KdsD (kdsD) (Escherichia coli O157:H7).